Reading from the N-terminus, the 857-residue chain is Protein STICHEL-like 2 (857 aa).

ATP is bound at residue 280–287 (GPRGTGKT). The Zn(2+) site is built by Cys-299, Cys-309, Cys-312, and Cys-315. Positions 544–576 (LTRHTSEEEMQKLRNALKILSDAEKHLRASKNQ) form a coiled coil. Disordered stretches follow at residues 593-629 (SSFA…DAEK) and 787-845 (ASSR…SSRL). Basic and acidic residues predominate over residues 599-610 (ENGRNQINKDVE). The segment covering 834–843 (QSETQNSKSS) has biased composition (polar residues).

It belongs to the DnaX/STICHEL family.

The polypeptide is Protein STICHEL-like 2 (Arabidopsis thaliana (Mouse-ear cress)).